A 179-amino-acid polypeptide reads, in one-letter code: Large ribosomal subunit protein uL6 (179 aa).

Belongs to the universal ribosomal protein uL6 family. As to quaternary structure, part of the 50S ribosomal subunit.

In terms of biological role, this protein binds to the 23S rRNA, and is important in its secondary structure. It is located near the subunit interface in the base of the L7/L12 stalk, and near the tRNA binding site of the peptidyltransferase center. In Mycobacterium sp. (strain KMS), this protein is Large ribosomal subunit protein uL6.